The primary structure comprises 54 residues: Ribulose bisphosphate carboxylase large chain (54 aa).

A propeptide spanning residues 1–2 (MS) is cleaved from the precursor. Proline 3 bears the N-acetylproline mark. Lysine 14 is subject to N6,N6,N6-trimethyllysine.

This sequence belongs to the RuBisCO large chain family. Type I subfamily. Heterohexadecamer of 8 large chains and 8 small chains.

It is found in the plastid. The protein resides in the chloroplast. It catalyses the reaction 2 (2R)-3-phosphoglycerate + 2 H(+) = D-ribulose 1,5-bisphosphate + CO2 + H2O. It carries out the reaction D-ribulose 1,5-bisphosphate + O2 = 2-phosphoglycolate + (2R)-3-phosphoglycerate + 2 H(+). Its function is as follows. RuBisCO catalyzes two reactions: the carboxylation of D-ribulose 1,5-bisphosphate, the primary event in carbon dioxide fixation, as well as the oxidative fragmentation of the pentose substrate in the photorespiration process. Both reactions occur simultaneously and in competition at the same active site. In Rhamnus cathartica (Common buckthorn), this protein is Ribulose bisphosphate carboxylase large chain (rbcL).